Here is a 482-residue protein sequence, read N- to C-terminus: G-protein coupled receptor 37-like 1 (482 aa).

The first 25 residues, 1–25 (MRWLWPLGVSLAVALAAGPERAPRG), serve as a signal peptide directing secretion. Disordered stretches follow at residues 25–56 (GVWL…AKGL) and 78–119 (PTQP…VQNP). Over 26 to 134 (VWLQQGGHQP…ERSYGAYAVL (109 aa)) the chain is Extracellular. Residues 40 to 54 (QPDRSRRGAEREDAK) are compositionally biased toward basic and acidic residues. Residue Asn105 is glycosylated (N-linked (GlcNAc...) asparagine). Residues 135–155 (LLALLLFAVGIVGSLAVMCIV) traverse the membrane as a helical segment. The Cytoplasmic segment spans residues 156–167 (WHSYYLKSAWNS). A helical transmembrane segment spans residues 168-188 (VLASLALWDFLVLFFCLPVVT). At 189-205 (FHEITKQRLLGAVSCRA) the chain is on the extracellular side. Cys203 and Cys286 are joined by a disulfide. Residues 206-226 (VPFVEVSSLGVTTFSLCALGI) form a helical membrane-spanning segment. Over 227–251 (DRFHVATSTLPKARPIEPCPSILAK) the chain is Cytoplasmic. A helical transmembrane segment spans residues 252 to 272 (LAVIWVGSMTLAAPELLLWQL). Residues 273 to 310 (VREPSPAAGTVDTCIMKPSAHLPESLYSLVLTYQNARM) are Extracellular-facing. Residues 311–331 (WWSFGCYFCLPVLFTVTCQLV) traverse the membrane as a helical segment. Topologically, residues 332–361 (TWRVRGTPGRKPESRPGPQEPRGARPSSTV) are cytoplasmic. Positions 338–358 (TPGRKPESRPGPQEPRGARPS) are disordered. Residues 362–382 (AGLAAVHALCALPENVCNVVA) traverse the membrane as a helical segment. Over 383-398 (AYLSAALTRQTLELLG) the chain is Extracellular. Residues 399–419 (LVTQFSTFFKAALTPLLLLCV) form a helical membrane-spanning segment. At 420-482 (SRPLGRAFLD…PPLLALGTPC (63 aa)) the chain is on the cytoplasmic side. The residue at position 480 (Thr480) is a Phosphothreonine.

It belongs to the G-protein coupled receptor 1 family. Interacts with the PTCH1 receptor. Undergoes metalloprotease-mediated cleavage which reduces its constitutive activity. In terms of processing, ubiquitinated.

It is found in the cell membrane. Its subcellular location is the cell projection. It localises to the cilium membrane. Functionally, G-protein coupled receptor. Has been shown to bind the neuroprotective and glioprotective factor prosaposin (PSAP), leading to endocytosis followed by an ERK phosphorylation cascade. However, other studies have shown that prosaposin does not increase activity. It has been suggested that GPR37L1 is a constitutively active receptor which signals through the guanine nucleotide-binding protein G(s) subunit alpha. Participates in the regulation of postnatal cerebellar development by modulating the Shh pathway. Regulates baseline blood pressure in females and protects against cardiovascular stress in males. Mediates inhibition of astrocyte glutamate transporters and reduction in neuronal N-methyl-D-aspartate receptor activity. This is G-protein coupled receptor 37-like 1 (GPR37L1) from Bos taurus (Bovine).